The sequence spans 552 residues: Non-structural protein NS1 (552 aa).

Belongs to the orbivirus non-structural protein NS1 family.

This Antilocapra americana (Pronghorn) protein is Non-structural protein NS1 (Segment-5).